We begin with the raw amino-acid sequence, 394 residues long: Elongation factor Tu (394 aa).

The region spanning 10-204 (KPHVNIGTIG…AVDEYIPTPD (195 aa)) is the tr-type G domain. The interval 19–26 (GHIDHGKT) is G1. Residue 19 to 26 (GHIDHGKT) coordinates GTP. Position 26 (T26) interacts with Mg(2+). The interval 60-64 (GITIN) is G2. The segment at 81–84 (DCPG) is G3. GTP contacts are provided by residues 81-85 (DCPGH) and 136-139 (NKCD). The interval 136–139 (NKCD) is G4. A G5 region spans residues 174-176 (SAL).

This sequence belongs to the TRAFAC class translation factor GTPase superfamily. Classic translation factor GTPase family. EF-Tu/EF-1A subfamily. As to quaternary structure, monomer.

Its subcellular location is the cytoplasm. The enzyme catalyses GTP + H2O = GDP + phosphate + H(+). Functionally, GTP hydrolase that promotes the GTP-dependent binding of aminoacyl-tRNA to the A-site of ribosomes during protein biosynthesis. In Mycoplasmoides gallisepticum (strain R(low / passage 15 / clone 2)) (Mycoplasma gallisepticum), this protein is Elongation factor Tu.